Reading from the N-terminus, the 393-residue chain is Lipoyl synthase, mitochondrial (393 aa).

[4Fe-4S] cluster-binding residues include cysteine 111, cysteine 116, cysteine 122, cysteine 142, cysteine 146, cysteine 149, and serine 357. The Radical SAM core domain occupies 127–346 (EHGTQTATIM…ETRGNELGFL (220 aa)).

Belongs to the radical SAM superfamily. Lipoyl synthase family. [4Fe-4S] cluster is required as a cofactor.

It localises to the mitochondrion. It catalyses the reaction [[Fe-S] cluster scaffold protein carrying a second [4Fe-4S](2+) cluster] + N(6)-octanoyl-L-lysyl-[protein] + 2 oxidized [2Fe-2S]-[ferredoxin] + 2 S-adenosyl-L-methionine + 4 H(+) = [[Fe-S] cluster scaffold protein] + N(6)-[(R)-dihydrolipoyl]-L-lysyl-[protein] + 4 Fe(3+) + 2 hydrogen sulfide + 2 5'-deoxyadenosine + 2 L-methionine + 2 reduced [2Fe-2S]-[ferredoxin]. Its pathway is protein modification; protein lipoylation via endogenous pathway; protein N(6)-(lipoyl)lysine from octanoyl-[acyl-carrier-protein]: step 2/2. Catalyzes the radical-mediated insertion of two sulfur atoms into the C-6 and C-8 positions of the octanoyl moiety bound to the lipoyl domains of lipoate-dependent enzymes, thereby converting the octanoylated domains into lipoylated derivatives. In Aedes aegypti (Yellowfever mosquito), this protein is Lipoyl synthase, mitochondrial.